We begin with the raw amino-acid sequence, 411 residues long: Phospholipase ABHD3 (411 aa).

The chain crosses the membrane as a helical; Signal-anchor for type II membrane protein span at residues 25–45; it reads VGFFGSGVGFSLILGFSVAYA. Residues 140-247 enclose the AB hydrolase-1 domain; it reads PTVLLLPGLT…PLKAAATFSV (108 aa). Catalysis depends on charge relay system residues S220, D346, and H375.

It belongs to the AB hydrolase superfamily. AB hydrolase 4 family.

Its subcellular location is the membrane. It carries out the reaction a 1,2-diacyl-sn-glycero-3-phosphocholine + H2O = a 1-acyl-sn-glycero-3-phosphocholine + a fatty acid + H(+). The enzyme catalyses a 1,2-diacyl-sn-glycero-3-phosphocholine + H2O = a 2-acyl-sn-glycero-3-phosphocholine + a fatty acid + H(+). It catalyses the reaction 1-tetradecanoyl-2-(9Z,12Z-octadecadienoyl)-sn-glycero-3-phosphocholine + H2O = 2-(9Z,12Z-octadecadienoyl)-sn-glycero-3-phosphocholine + tetradecanoate + H(+). The catalysed reaction is 1-tetradecanoyl-2-(9Z,12Z-octadecadienoyl)-sn-glycero-3-phosphocholine + H2O = 1-tetradecanoyl-sn-glycero-3-phosphocholine + (9Z,12Z)-octadecadienoate + H(+). It carries out the reaction 1-tetradecanoyl-2-(5Z,8Z,11Z,14Z-eicosatetraenoyl)-sn-glycero-3-phosphocholine + H2O = 2-(5Z,8Z,11Z,14Z)-eicosatetraenoyl-sn-glycero-3-phosphocholine + tetradecanoate + H(+). The enzyme catalyses 1-tetradecanoyl-2-(4Z,7Z,10Z,13Z,16Z,19Z-docosahexaenoyl)-sn-glycero-3-phosphocholine + H2O = 2-(4Z,7Z,10Z,13Z,16Z,19Z-docosahexaenoyl)-sn-glycero-3-phosphocholine + tetradecanoate + H(+). It catalyses the reaction 1,2-ditetradecanoyl-sn-glycero-3-phosphocholine + H2O = 2-tetradecanoyl-sn-glycero-3-phosphocholine + tetradecanoate + H(+). The catalysed reaction is 1-octadecanoyl-2-acetyl-sn-glycero-3-phosphocholine + H2O = 1-octadecanoyl-sn-glycero-3-phosphocholine + acetate + H(+). It carries out the reaction 1,2-ditetradecanoyl-sn-glycero-3-phosphocholine + H2O = 1-tetradecanoyl-sn-glycero-3-phosphocholine + tetradecanoate + H(+). The enzyme catalyses 1-octadecanoyl-2-pentanoyl-sn-glycero-3-phosphocholine + H2O = pentanoate + 1-octadecanoyl-sn-glycero-3-phosphocholine + H(+). It catalyses the reaction 1-octadecanoyl-2-hexanoyl-sn-glycero-3-phosphocholine + H2O = hexanoate + 1-octadecanoyl-sn-glycero-3-phosphocholine + H(+). The catalysed reaction is 1-octadecanoyl-2-octanoyl-sn-glycero-3-phosphocholine + H2O = 1-octadecanoyl-sn-glycero-3-phosphocholine + octanoate + H(+). It carries out the reaction 1-octadecanoyl-2-nonanoyl-sn-glycero-3-phosphocholine + H2O = nonanoate + 1-octadecanoyl-sn-glycero-3-phosphocholine + H(+). The enzyme catalyses 1-O-hexadecyl-2-nonadioyl-sn-glycero-3-phosphocholine + H2O = nonanedioate + 1-O-hexadecyl-sn-glycero-3-phosphocholine + H(+). It catalyses the reaction 1-hexadecanoyl-2-nonadioyl-sn-glycero-3-phosphocholine + H2O = nonanedioate + 1-hexadecanoyl-sn-glycero-3-phosphocholine + H(+). The catalysed reaction is 1-hexadecanoyl-2-(9-oxononanoyl)-sn-glycero-3-phosphocholine + H2O = 9-oxononanoate + 1-hexadecanoyl-sn-glycero-3-phosphocholine + H(+). It carries out the reaction 1-hexadecanoyl-2-(5-oxopentanoyl)-sn-glycero-3-phosphocholine + H2O = 5-oxopentanoate + 1-hexadecanoyl-sn-glycero-3-phosphocholine + H(+). The enzyme catalyses 1-hexadecanoyl-2-glutaroyl-sn-glycero-3-phosphocholine + H2O = glutarate + 1-hexadecanoyl-sn-glycero-3-phosphocholine + H(+). It catalyses the reaction 1-O-hexadecyl-2-acetyl-sn-glycero-3-phosphocholine + H2O = 1-O-hexadecyl-sn-glycero-3-phosphocholine + acetate + H(+). Its function is as follows. Phospholipase that may play a role in phospholipids remodeling. May selectively cleave myristate (C14)-containing phosphatidylcholines through its predominant phospholipase 1 activity, cleaving preferentially acyl groups in sn1 position. In parallel, may have a minor phospholipase 2 activity acting on acyl groups in position sn2. In addition to (C14)-containing phosphatidylcholines, may also act on other medium-chain-containing and oxidatively truncated phospholipids. The sequence is that of Phospholipase ABHD3 from Bos taurus (Bovine).